The chain runs to 276 residues: Potassium/proton antiporter CemA (276 aa).

Transmembrane regions (helical) follow at residues 59 to 79, 199 to 219, and 236 to 256; these read LLLL…WIFG, FFII…GWEV, and FIFL…KYWI.

The protein belongs to the CemA family.

It is found in the plastid. It localises to the chloroplast inner membrane. The enzyme catalyses K(+)(in) + H(+)(out) = K(+)(out) + H(+)(in). Functionally, contributes to K(+)/H(+) antiport activity by supporting proton efflux to control proton extrusion and homeostasis in chloroplasts in a light-dependent manner to modulate photosynthesis. Prevents excessive induction of non-photochemical quenching (NPQ) under continuous-light conditions. Indirectly promotes efficient inorganic carbon uptake into chloroplasts. The polypeptide is Potassium/proton antiporter CemA (Cyanidioschyzon merolae (strain NIES-3377 / 10D) (Unicellular red alga)).